Here is a 1734-residue protein sequence, read N- to C-terminus: Protein TIC 214 (1734 aa).

Helical transmembrane passes span isoleucine 19–glycine 39, phenylalanine 68–leucine 88, proline 91–histidine 111, valine 133–leucine 153, valine 176–isoleucine 196, and isoleucine 227–isoleucine 247. A coiled-coil region spans residues asparagine 1433–glutamine 1485.

This sequence belongs to the TIC214 family. As to quaternary structure, part of the Tic complex.

Its subcellular location is the plastid. It localises to the chloroplast inner membrane. Its function is as follows. Involved in protein precursor import into chloroplasts. May be part of an intermediate translocation complex acting as a protein-conducting channel at the inner envelope. The polypeptide is Protein TIC 214 (Lepidium virginicum (Virginia pepperweed)).